We begin with the raw amino-acid sequence, 77 residues long: RNA-binding protein Hfq (77 aa).

In terms of domain architecture, Sm spans 9–68 (DPFLNALRKEHIPVAIYLVNGIKLQGQIESFDQFVILLKNTVSQMVYKHAISTVVPARAI).

Belongs to the Hfq family. In terms of assembly, homohexamer.

RNA chaperone that binds small regulatory RNA (sRNAs) and mRNAs to facilitate mRNA translational regulation in response to envelope stress, environmental stress and changes in metabolite concentrations. Also binds with high specificity to tRNAs. The chain is RNA-binding protein Hfq from Psychromonas ingrahamii (strain DSM 17664 / CCUG 51855 / 37).